The following is a 546-amino-acid chain: (-)-5-epieremophilene synthase STPS3 (546 aa).

Positions 299, 303, 442, 446, and 450 each coordinate Mg(2+). Positions 299–303 (DDTYD) match the DDXXD motif motif.

Belongs to the terpene synthase family. Tpsa subfamily. Monomer. Mg(2+) is required as a cofactor. As to expression, highly expressed in flowers and at lower levels in leaves.

The enzyme catalyses (2E,6E)-farnesyl diphosphate = (-)-5-epi-eremophilene + diphosphate. The protein operates within secondary metabolite biosynthesis; terpenoid biosynthesis. Functionally, sesquiterpene synthase that catalyzes the conversion of farnesyl diphosphate to (-)-5-epi-eremophilene. The protein is (-)-5-epieremophilene synthase STPS3 of Salvia miltiorrhiza (Chinese sage).